Here is a 594-residue protein sequence, read N- to C-terminus: MRSVYCGVVNTSNIDQEITLCGWVDRRRDHGGVIFIDLRDREGIVQVVFDPDAADKFALADKVRPEYVLRVTGKVRARSEATVNANMATGQIEVYGTDLEILNSAETPPFQLDEHTNVGEDVRLKYRYLDLRRDAMQQRLKFRSKVTNAIRNYLDDNDFLDIETPILTRATPEGARDYLVPSRTHDGKFFALPQSPQLFKQLLMVSGFDRYYQIAKCFRDEDLRADRQPEFTQIDIETSFMDEEQIMSVTEGMISKLFRELKGVELGEFPRMPYAEAMEKYGSDKPDMRIPLEMVEIKDLMASVDFKVFSGPASDPKGRVTAMKVPGGGEIPRKKIDAYTKFVSIYGAKGLAYIKVNDKTDLEGGLQSPIVKFLPQDVLQALLDRLEVENGDLIFFGADSAKVVTEALGALRCELGKDLNLYTCEWAPLWVVDFPMFEELEDGSLTALHHPFTAPSCSPEELSANPATALSRAYDMVLNGTELGGGSIRIHDQSMQQEVFRVLGIGEEEQREKFGFLLDALKYGAPPHGGLAFGLDRLIMLMTGASSIRDVIAFPKTQSAACVMTDAPGAVDKKQLEELHIRLRPVVAQPKEQG.

An L-aspartate-binding site is contributed by Glu173. The segment at 197-200 is aspartate; sequence QLFK. Arg219 contributes to the L-aspartate binding site. ATP contacts are provided by residues 219-221 and Gln228; that span reads RDE. Residue His449 participates in L-aspartate binding. Position 482 (Glu482) interacts with ATP. Arg489 serves as a coordination point for L-aspartate. Residue 534-537 participates in ATP binding; sequence GLDR.

Belongs to the class-II aminoacyl-tRNA synthetase family. Type 1 subfamily. Homodimer.

The protein localises to the cytoplasm. It catalyses the reaction tRNA(Asx) + L-aspartate + ATP = L-aspartyl-tRNA(Asx) + AMP + diphosphate. Functionally, aspartyl-tRNA synthetase with relaxed tRNA specificity since it is able to aspartylate not only its cognate tRNA(Asp) but also tRNA(Asn). Reaction proceeds in two steps: L-aspartate is first activated by ATP to form Asp-AMP and then transferred to the acceptor end of tRNA(Asp/Asn). The sequence is that of Aspartate--tRNA(Asp/Asn) ligase from Saccharophagus degradans (strain 2-40 / ATCC 43961 / DSM 17024).